A 223-amino-acid chain; its full sequence is uncharacterized protein (223 aa).

It to M.jannaschii MJ0575.

This is an uncharacterized protein from Methanocaldococcus jannaschii (strain ATCC 43067 / DSM 2661 / JAL-1 / JCM 10045 / NBRC 100440) (Methanococcus jannaschii).